Reading from the N-terminus, the 798-residue chain is Exo-1,4-beta-xylosidase xlnD (798 aa).

The first 20 residues, Met1–Gly20, serve as a signal peptide directing secretion. N-linked (GlcNAc...) asparagine glycans are attached at residues Asn23, Asn87, Asn142, and Asn237. Asp310 is a catalytic residue. N-linked (GlcNAc...) asparagine glycans are attached at residues Asn326, Asn391, Asn404, Asn443, Asn480, Asn522, Asn618, Asn645, Asn658, Asn685, and Asn707.

The protein belongs to the glycosyl hydrolase 3 family.

It is found in the secreted. The enzyme catalyses Hydrolysis of (1-&gt;4)-beta-D-xylans, to remove successive D-xylose residues from the non-reducing termini.. It functions in the pathway glycan degradation; xylan degradation. In terms of biological role, xylan 1,4-beta-xylosidase involved in the hydrolysis of xylan, a major structural heterogeneous polysaccharide found in plant biomass representing the second most abundant polysaccharide in the biosphere, after cellulose. This chain is Exo-1,4-beta-xylosidase xlnD (xlnD), found in Aspergillus oryzae (strain ATCC 42149 / RIB 40) (Yellow koji mold).